We begin with the raw amino-acid sequence, 413 residues long: Alpha-1-antitrypsin 1-1 (413 aa).

Positions 1–24 (MTPSISWGLLLLAGLCCLVPSFLA) are cleaved as a signal peptide. Asn-64, Asn-101, and Asn-265 each carry an N-linked (GlcNAc...) asparagine glycan. The segment at 368 to 387 (AVTVLQMVPMSMPPILRFDH) is RCL.

It belongs to the serpin family.

It is found in the secreted. In terms of biological role, inhibitor of serine proteases. Its primary target is elastase, but it also has a moderate affinity for plasmin and thrombin. This Mus musculus (Mouse) protein is Alpha-1-antitrypsin 1-1 (Serpina1a).